The following is a 388-amino-acid chain: 4-hydroxy-3-methylbut-2-en-1-yl diphosphate synthase (flavodoxin) (388 aa).

[4Fe-4S] cluster contacts are provided by cysteine 281, cysteine 284, cysteine 316, and glutamate 323.

The protein belongs to the IspG family. [4Fe-4S] cluster serves as cofactor.

The catalysed reaction is (2E)-4-hydroxy-3-methylbut-2-enyl diphosphate + oxidized [flavodoxin] + H2O + 2 H(+) = 2-C-methyl-D-erythritol 2,4-cyclic diphosphate + reduced [flavodoxin]. Its pathway is isoprenoid biosynthesis; isopentenyl diphosphate biosynthesis via DXP pathway; isopentenyl diphosphate from 1-deoxy-D-xylulose 5-phosphate: step 5/6. In terms of biological role, converts 2C-methyl-D-erythritol 2,4-cyclodiphosphate (ME-2,4cPP) into 1-hydroxy-2-methyl-2-(E)-butenyl 4-diphosphate. This chain is 4-hydroxy-3-methylbut-2-en-1-yl diphosphate synthase (flavodoxin), found in Paenarthrobacter aurescens (strain TC1).